We begin with the raw amino-acid sequence, 367 residues long: NADH-ubiquinone oxidoreductase chain 1 (367 aa).

The next 10 helical transmembrane spans lie at isoleucine 5 to tyrosine 25, proline 43 to leucine 63, isoleucine 74 to valine 94, leucine 108 to glycine 128, leucine 152 to valine 172, alanine 179 to alanine 199, alanine 225 to leucine 245, phenylalanine 265 to tyrosine 285, leucine 301 to valine 321, and phenylalanine 336 to leucine 356.

The protein belongs to the complex I subunit 1 family.

The protein localises to the mitochondrion inner membrane. It catalyses the reaction a ubiquinone + NADH + 5 H(+)(in) = a ubiquinol + NAD(+) + 4 H(+)(out). Functionally, core subunit of the mitochondrial membrane respiratory chain NADH dehydrogenase (Complex I) that is believed to belong to the minimal assembly required for catalysis. Complex I functions in the transfer of electrons from NADH to the respiratory chain. The immediate electron acceptor for the enzyme is believed to be ubiquinone. The sequence is that of NADH-ubiquinone oxidoreductase chain 1 (ND1) from Podospora anserina (strain S / ATCC MYA-4624 / DSM 980 / FGSC 10383) (Pleurage anserina).